Reading from the N-terminus, the 343-residue chain is Heat-inducible transcription repressor HrcA (343 aa).

It belongs to the HrcA family.

In terms of biological role, negative regulator of class I heat shock genes (grpE-dnaK-dnaJ and groELS operons). Prevents heat-shock induction of these operons. The chain is Heat-inducible transcription repressor HrcA from Bacillus cytotoxicus (strain DSM 22905 / CIP 110041 / 391-98 / NVH 391-98).